Here is a 947-residue protein sequence, read N- to C-terminus: Leucine-rich repeat-containing protein 37B (947 aa).

Residues 1 to 27 form the signal peptide; the sequence is MSWLRFWGPWPLLTWQLLSLLVKEAQP. The Extracellular segment spans residues 28–905; it reads LVWVKDPLQL…EVPGDDYKNK (878 aa). Disordered stretches follow at residues 42–88, 226–257, 294–458, and 484–514; these read LGPP…ALPQ, YLSMDTLYPGSLPPELRVNADEPPGPPEQVGL, EVEP…PEPT, and SLTEVTGPPTKLESSQDSLVQSETAPEEQKA. The span at 311-320 shows a compositional bias: polar residues; that stretch reads SMESLAQTPL. N-linked (GlcNAc...) asparagine glycosylation is present at Asn358. Polar residues-rich tracts occupy residues 404–415, 436–445, and 495–507; these read GQAQHSHLTEAT, SPTTEETSAQ, and LESSQDSLVQSET. LRR repeat units follow at residues 556–577, 580–601, 604–625, 628–649, 655–676, and 679–699; these read IFTTLNFQGNYISYLDGNVWKA, WTEKLILSENYLTELPKDSFEG, YLQYLDLSCNKIRYIERQTFES, FLQYINLGCNLITKLSLGTFQA, FLHNLILNRNPLTTVEDPYLFE, and ALKYLDMGTTHITLTTLKNIL. Residue Asn789 is glycosylated (N-linked (GlcNAc...) asparagine). Positions 867 to 897 form a coiled coil; that stretch reads DTDQQKTNYINENMEQNEQKEQKSSELMKEV. A helical transmembrane segment spans residues 906 to 926; that stretch reads LIFAISVTVILIILIIIFCLI. The Cytoplasmic segment spans residues 927-947; the sequence is EVNSHKRASEKYKDNPSISGA.

The protein localises to the membrane. This Homo sapiens (Human) protein is Leucine-rich repeat-containing protein 37B (LRRC37B).